A 319-amino-acid polypeptide reads, in one-letter code: Cytochrome c biogenesis protein CcsA (319 aa).

Transmembrane regions (helical) follow at residues 17-37, 44-64, 68-88, 143-163, 223-243, 257-271, and 286-306; these read TISI…LGGL, GMIV…ASSG, LSNL…LHTI, MLLS…ILII, VISL…VWAN, TWAF…IYLH, and VASI…LLGI.

The protein belongs to the CcmF/CycK/Ccl1/NrfE/CcsA family. As to quaternary structure, may interact with Ccs1.

The protein resides in the plastid. Its subcellular location is the chloroplast thylakoid membrane. Required during biogenesis of c-type cytochromes (cytochrome c6 and cytochrome f) at the step of heme attachment. The chain is Cytochrome c biogenesis protein CcsA from Lolium perenne (Perennial ryegrass).